A 346-amino-acid chain; its full sequence is Phosphoribosylformylglycinamidine cyclo-ligase (346 aa).

Belongs to the AIR synthase family.

Its subcellular location is the cytoplasm. The catalysed reaction is 2-formamido-N(1)-(5-O-phospho-beta-D-ribosyl)acetamidine + ATP = 5-amino-1-(5-phospho-beta-D-ribosyl)imidazole + ADP + phosphate + H(+). It participates in purine metabolism; IMP biosynthesis via de novo pathway; 5-amino-1-(5-phospho-D-ribosyl)imidazole from N(2)-formyl-N(1)-(5-phospho-D-ribosyl)glycinamide: step 2/2. The polypeptide is Phosphoribosylformylglycinamidine cyclo-ligase (Photorhabdus laumondii subsp. laumondii (strain DSM 15139 / CIP 105565 / TT01) (Photorhabdus luminescens subsp. laumondii)).